The chain runs to 258 residues: uncharacterized protein (258 aa).

The next 6 membrane-spanning stretches (helical) occupy residues 21 to 41, 73 to 93, 119 to 139, 153 to 173, 182 to 202, and 229 to 249; these read LIWLPIAMMIVGLTQPLTIYY, LSQFNTLGMALVIFSVMGSVA, WLIQSVIGIMSFAAGYGLAYY, FAASLGLYALWVIFIVTAGLA, GAAAACGIGLTAAVSFAVSLF, and FFGWSLTFSILCIMLLAVFSV.

The protein resides in the cell membrane. This is an uncharacterized protein from Bacillus subtilis (strain 168).